A 63-amino-acid chain; its full sequence is MAETSKTVVVTQIGSPIGRRSDQRATLIGLGLNKMNRTRELEDTPAVRGMIDKIAHLVRVEDV.

This sequence belongs to the universal ribosomal protein uL30 family. As to quaternary structure, part of the 50S ribosomal subunit.

This chain is Large ribosomal subunit protein uL30, found in Rhodospirillum rubrum (strain ATCC 11170 / ATH 1.1.1 / DSM 467 / LMG 4362 / NCIMB 8255 / S1).